Here is a 92-residue protein sequence, read N- to C-terminus: DNA-binding protein HU (92 aa).

Residues alanine 58–serine 92 are disordered.

It belongs to the bacterial histone-like protein family. As to quaternary structure, homodimer.

In terms of biological role, histone-like DNA-binding protein which is capable of wrapping DNA to stabilize it, and thus to prevent its denaturation under extreme environmental conditions. The protein is DNA-binding protein HU (hup) of Caulobacter vibrioides (strain ATCC 19089 / CIP 103742 / CB 15) (Caulobacter crescentus).